We begin with the raw amino-acid sequence, 122 residues long: Head fiber dimeric protein (122 aa).

As to quaternary structure, homodimer. Interacts with the major capsid protein.

Its subcellular location is the virion. Functionally, forms short fibers at the surface of the viral capsid. The sequence is that of Head fiber dimeric protein from Bacteroides intestinalis (Bacteroides phage PhiCrAss001).